We begin with the raw amino-acid sequence, 238 residues long: 2-C-methyl-D-erythritol 4-phosphate cytidylyltransferase (238 aa).

Belongs to the IspD/TarI cytidylyltransferase family. IspD subfamily.

The enzyme catalyses 2-C-methyl-D-erythritol 4-phosphate + CTP + H(+) = 4-CDP-2-C-methyl-D-erythritol + diphosphate. Its pathway is isoprenoid biosynthesis; isopentenyl diphosphate biosynthesis via DXP pathway; isopentenyl diphosphate from 1-deoxy-D-xylulose 5-phosphate: step 2/6. In terms of biological role, catalyzes the formation of 4-diphosphocytidyl-2-C-methyl-D-erythritol from CTP and 2-C-methyl-D-erythritol 4-phosphate (MEP). The chain is 2-C-methyl-D-erythritol 4-phosphate cytidylyltransferase from Salinibacter ruber (strain DSM 13855 / M31).